Here is a 36-residue protein sequence, read N- to C-terminus: Pancreatic polypeptide (36 aa).

Phe36 is subject to Phenylalanine amide.

Belongs to the NPY family.

The protein localises to the secreted. In terms of biological role, hormone secreted by pancreatic cells that acts as a regulator of pancreatic and gastrointestinal functions. This is Pancreatic polypeptide (ppy) from Alligator mississippiensis (American alligator).